We begin with the raw amino-acid sequence, 482 residues long: tRNA sulfurtransferase (482 aa).

Residues 61 to 165 enclose the THUMP domain; sequence LVIRDALTRI…DDRLLLIKGR (105 aa). ATP is bound by residues 183–184, lysine 265, glycine 287, and glutamine 296; that span reads LI. A disulfide bridge connects residues cysteine 344 and cysteine 456. Positions 404–482 constitute a Rhodanese domain; the sequence is FGPNDVILDI…GFANVKVYRP (79 aa). The active-site Cysteine persulfide intermediate is the cysteine 456.

This sequence belongs to the ThiI family.

Its subcellular location is the cytoplasm. It carries out the reaction [ThiI sulfur-carrier protein]-S-sulfanyl-L-cysteine + a uridine in tRNA + 2 reduced [2Fe-2S]-[ferredoxin] + ATP + H(+) = [ThiI sulfur-carrier protein]-L-cysteine + a 4-thiouridine in tRNA + 2 oxidized [2Fe-2S]-[ferredoxin] + AMP + diphosphate. It catalyses the reaction [ThiS sulfur-carrier protein]-C-terminal Gly-Gly-AMP + S-sulfanyl-L-cysteinyl-[cysteine desulfurase] + AH2 = [ThiS sulfur-carrier protein]-C-terminal-Gly-aminoethanethioate + L-cysteinyl-[cysteine desulfurase] + A + AMP + 2 H(+). The protein operates within cofactor biosynthesis; thiamine diphosphate biosynthesis. In terms of biological role, catalyzes the ATP-dependent transfer of a sulfur to tRNA to produce 4-thiouridine in position 8 of tRNAs, which functions as a near-UV photosensor. Also catalyzes the transfer of sulfur to the sulfur carrier protein ThiS, forming ThiS-thiocarboxylate. This is a step in the synthesis of thiazole, in the thiamine biosynthesis pathway. The sulfur is donated as persulfide by IscS. In Salmonella typhimurium (strain LT2 / SGSC1412 / ATCC 700720), this protein is tRNA sulfurtransferase.